A 183-amino-acid chain; its full sequence is MTKQPEDWLDDVPGDDIEDEDDEIIWVSKSEIKRDAEELKRLGAEIVDLGKNALDKIPLDADLRAAIELAQRIKMEGRRRQLQLIGKMLRQRDVEPIRQALDKLKNRHNQQVVLFHKLENLRDRLIDQGDDAIAEVLNLWPDADRQQLRTLIRNAKKEKEGNKPPKSARQIFQYLRELAENEG.

Belongs to the DarP family.

It is found in the cytoplasm. In terms of biological role, member of a network of 50S ribosomal subunit biogenesis factors which assembles along the 30S-50S interface, preventing incorrect 23S rRNA structures from forming. Promotes peptidyl transferase center (PTC) maturation. This chain is Dual-action ribosomal maturation protein DarP, found in Escherichia coli O81 (strain ED1a).